Reading from the N-terminus, the 940-residue chain is Alanine--tRNA ligase (940 aa).

Zn(2+) is bound by residues His581, His585, Cys683, and His687.

Belongs to the class-II aminoacyl-tRNA synthetase family. Zn(2+) serves as cofactor.

It localises to the cytoplasm. It carries out the reaction tRNA(Ala) + L-alanine + ATP = L-alanyl-tRNA(Ala) + AMP + diphosphate. Its function is as follows. Catalyzes the attachment of alanine to tRNA(Ala) in a two-step reaction: alanine is first activated by ATP to form Ala-AMP and then transferred to the acceptor end of tRNA(Ala). Also edits incorrectly charged Ser-tRNA(Ala) and Gly-tRNA(Ala) via its editing domain. The chain is Alanine--tRNA ligase from Leptospira borgpetersenii serovar Hardjo-bovis (strain JB197).